Reading from the N-terminus, the 563-residue chain is MDTKTLIASEIAKVVPELEQDAIFNLLETPKNSDMGDLAFPAFSLAKVLRKAPQMIASELAEQIDESQFEKVVAVGPYINFFLDKAKISSQVLEQVITAGSDYAQQDEGQGRNVAIDMSSPNIAKPFSIGHLRSTVIGDSLAHIFAKMGYQPVKINHLGDWGKQFGMLIVAYKKWGDEAAVQAHPIDELLKLYVRINAEAETDPTIDEEAREWFRKLEDGDKEATELWQWFRDESLLEFNRLYDQLHVTFDSYNGEAFYNDKMDEVLDLLEAKNLLVESKGAQVVNLEKYGIEHPALIKKSDGATLYITRDLAAALYRKRTYDFAKSVYVVGNEQAAHFKQLKAVLKEMGYDWSDDMTHVAFGLVTKGGAKLSTRKGNVILLEPTVAEAINRAASQIEAKNPNLADKEAVAHAVGVGAIKFYDLKTDRMNGYDFDLEAMVSFEGETGPYVQYAHARIQSILRKADFTPSATTTYSLADAESWEIIKLIQDFPRIIKRTSDNFEPSIMAKFAINLAQSFNKYYAHTRILDDNSERDNRLALCYATATVLKEALRLLGVDAPNEM.

Residues 121-131 carry the 'HIGH' region motif; that stretch reads PNIAKPFSIGH.

The protein belongs to the class-I aminoacyl-tRNA synthetase family. Monomer.

It localises to the cytoplasm. It carries out the reaction tRNA(Arg) + L-arginine + ATP = L-arginyl-tRNA(Arg) + AMP + diphosphate. The sequence is that of Arginine--tRNA ligase from Streptococcus pyogenes serotype M18 (strain MGAS8232).